The primary structure comprises 309 residues: tRNA dimethylallyltransferase (309 aa).

Residue 10 to 17 (GPTAVGKT) participates in ATP binding. 12–17 (TAVGKT) contributes to the substrate binding site. The tract at residues 35–38 (DSMQ) is interaction with substrate tRNA.

Belongs to the IPP transferase family. Monomer. Requires Mg(2+) as cofactor.

The enzyme catalyses adenosine(37) in tRNA + dimethylallyl diphosphate = N(6)-dimethylallyladenosine(37) in tRNA + diphosphate. Its function is as follows. Catalyzes the transfer of a dimethylallyl group onto the adenine at position 37 in tRNAs that read codons beginning with uridine, leading to the formation of N6-(dimethylallyl)adenosine (i(6)A). The protein is tRNA dimethylallyltransferase of Clostridium beijerinckii (strain ATCC 51743 / NCIMB 8052) (Clostridium acetobutylicum).